We begin with the raw amino-acid sequence, 432 residues long: Glucose-6-phosphate isomerase (432 aa).

Catalysis depends on Glu-283, which acts as the Proton donor. Catalysis depends on residues His-304 and Lys-418.

This sequence belongs to the GPI family.

The protein localises to the cytoplasm. The enzyme catalyses alpha-D-glucose 6-phosphate = beta-D-fructose 6-phosphate. The protein operates within carbohydrate biosynthesis; gluconeogenesis. Its pathway is carbohydrate degradation; glycolysis; D-glyceraldehyde 3-phosphate and glycerone phosphate from D-glucose: step 2/4. Its function is as follows. Catalyzes the reversible isomerization of glucose-6-phosphate to fructose-6-phosphate. The protein is Glucose-6-phosphate isomerase of Rubrobacter xylanophilus (strain DSM 9941 / JCM 11954 / NBRC 16129 / PRD-1).